We begin with the raw amino-acid sequence, 384 residues long: Glucans biosynthesis protein C (384 aa).

Helical transmembrane passes span 17-37, 54-74, 91-111, 140-160, 173-193, 212-232, 240-260, 274-294, 311-331, and 338-358; these read AWLMLLGIPFHISLIYSTHSW, FIHAFRMQVFFVISGYFSYML, VGIPMLTAIPLLTLPQFILLQ, LWFLLVLVILTTVSIGIFTWF, AISLAKLSLIFFLLGVAYAAI, FIVMQTLFYVPFFILGALAFI, FTTPSRGCTLGAAVAFIAYLL, TESVITMVMGLWMVNVVFSLG, ASLFIYLVHHPLTLFFGAYIT, and LIGFLCGLIFVMGIALILYEI.

Belongs to the acyltransferase 3 family. OpgC subfamily.

The protein resides in the cell membrane. It functions in the pathway glycan metabolism; osmoregulated periplasmic glucan (OPG) biosynthesis. In terms of biological role, necessary for the succinyl substitution of periplasmic glucans. Could catalyze the transfer of succinyl residues from the cytoplasmic side of the membrane to the nascent glucan backbones on the periplasmic side of the membrane. The sequence is that of Glucans biosynthesis protein C from Salmonella typhi.